A 431-amino-acid polypeptide reads, in one-letter code: Serine--tRNA ligase (431 aa).

237 to 239 provides a ligand contact to L-serine; that stretch reads TAE. 268–270 is an ATP binding site; it reads RSE. Glu-291 is a binding site for L-serine. 355–358 provides a ligand contact to ATP; sequence EISS. Ser-390 contributes to the L-serine binding site.

Belongs to the class-II aminoacyl-tRNA synthetase family. Type-1 seryl-tRNA synthetase subfamily. In terms of assembly, homodimer. The tRNA molecule binds across the dimer.

It localises to the cytoplasm. The catalysed reaction is tRNA(Ser) + L-serine + ATP = L-seryl-tRNA(Ser) + AMP + diphosphate + H(+). The enzyme catalyses tRNA(Sec) + L-serine + ATP = L-seryl-tRNA(Sec) + AMP + diphosphate + H(+). It functions in the pathway aminoacyl-tRNA biosynthesis; selenocysteinyl-tRNA(Sec) biosynthesis; L-seryl-tRNA(Sec) from L-serine and tRNA(Sec): step 1/1. Functionally, catalyzes the attachment of serine to tRNA(Ser). Is also able to aminoacylate tRNA(Sec) with serine, to form the misacylated tRNA L-seryl-tRNA(Sec), which will be further converted into selenocysteinyl-tRNA(Sec). The chain is Serine--tRNA ligase from Neisseria gonorrhoeae (strain NCCP11945).